A 508-amino-acid chain; its full sequence is Photosystem II CP47 reaction center protein (508 aa).

The next 6 membrane-spanning stretches (helical) occupy residues 21 to 36 (SVHIMHTALVAGWAGS), 101 to 115 (IVFSGLCFLAAIWHW), 140 to 156 (GIHLFLAGLACFGFGAF), 203 to 218 (IAAGTLGILAGLFHLS), 237 to 252 (VLSSSIAAVFFAAFVV), and 457 to 472 (SFALLFFFGHIWHGSR).

It belongs to the PsbB/PsbC family. PsbB subfamily. As to quaternary structure, PSII is composed of 1 copy each of membrane proteins PsbA, PsbB, PsbC, PsbD, PsbE, PsbF, PsbH, PsbI, PsbJ, PsbK, PsbL, PsbM, PsbT, PsbX, PsbY, PsbZ, Psb30/Ycf12, at least 3 peripheral proteins of the oxygen-evolving complex and a large number of cofactors. It forms dimeric complexes. It depends on Binds multiple chlorophylls. PSII binds additional chlorophylls, carotenoids and specific lipids. as a cofactor.

It is found in the plastid. The protein resides in the chloroplast thylakoid membrane. Functionally, one of the components of the core complex of photosystem II (PSII). It binds chlorophyll and helps catalyze the primary light-induced photochemical processes of PSII. PSII is a light-driven water:plastoquinone oxidoreductase, using light energy to abstract electrons from H(2)O, generating O(2) and a proton gradient subsequently used for ATP formation. In Helianthus annuus (Common sunflower), this protein is Photosystem II CP47 reaction center protein.